Reading from the N-terminus, the 61-residue chain is Large ribosomal subunit protein uL30 (61 aa).

It belongs to the universal ribosomal protein uL30 family. As to quaternary structure, part of the 50S ribosomal subunit.

The polypeptide is Large ribosomal subunit protein uL30 (Bordetella parapertussis (strain 12822 / ATCC BAA-587 / NCTC 13253)).